Here is a 428-residue protein sequence, read N- to C-terminus: Enolase (428 aa).

(2R)-2-phosphoglycerate is bound at residue Gln163. The Proton donor role is filled by Glu205. Asp242, Glu285, and Asp312 together coordinate Mg(2+). (2R)-2-phosphoglycerate is bound by residues Lys337, Arg366, Ser367, and Lys388. Lys337 serves as the catalytic Proton acceptor.

Belongs to the enolase family. The cofactor is Mg(2+).

It is found in the cytoplasm. It localises to the secreted. Its subcellular location is the cell surface. It carries out the reaction (2R)-2-phosphoglycerate = phosphoenolpyruvate + H2O. The protein operates within carbohydrate degradation; glycolysis; pyruvate from D-glyceraldehyde 3-phosphate: step 4/5. In terms of biological role, catalyzes the reversible conversion of 2-phosphoglycerate (2-PG) into phosphoenolpyruvate (PEP). It is essential for the degradation of carbohydrates via glycolysis. This chain is Enolase, found in Neisseria gonorrhoeae (strain ATCC 700825 / FA 1090).